We begin with the raw amino-acid sequence, 651 residues long: Acetyl-coenzyme A synthetase (651 aa).

CoA contacts are provided by residues 191–194 (RGGK), threonine 311, and asparagine 335. ATP-binding positions include 387 to 389 (GEP), 411 to 416 (DTWWQT), aspartate 500, and arginine 515. Residue serine 523 participates in CoA binding. Residue arginine 526 coordinates ATP. Mg(2+) contacts are provided by valine 537, histidine 539, and valine 542. Arginine 584 contributes to the CoA binding site. Lysine 609 is modified (N6-acetyllysine).

This sequence belongs to the ATP-dependent AMP-binding enzyme family. The cofactor is Mg(2+). In terms of processing, acetylated. Deacetylation by the SIR2-homolog deacetylase activates the enzyme.

The catalysed reaction is acetate + ATP + CoA = acetyl-CoA + AMP + diphosphate. Functionally, catalyzes the conversion of acetate into acetyl-CoA (AcCoA), an essential intermediate at the junction of anabolic and catabolic pathways. AcsA undergoes a two-step reaction. In the first half reaction, AcsA combines acetate with ATP to form acetyl-adenylate (AcAMP) intermediate. In the second half reaction, it can then transfer the acetyl group from AcAMP to the sulfhydryl group of CoA, forming the product AcCoA. This chain is Acetyl-coenzyme A synthetase, found in Pseudomonas syringae pv. syringae (strain B728a).